Reading from the N-terminus, the 870-residue chain is H(+)/Cl(-) exchange transporter 6 (870 aa).

Topologically, residues 1 to 80 are cytoplasmic; it reads MAGCRGSVCC…KKGRRYEAVK (80 aa). 2 helical membrane-spanning segments follow: residues 81 to 113 and 128 to 150; these read WMVV…FGVV and LSLL…LVLI. The Selectivity filter part_1 motif lies at 156–160; the sequence is GSGIP. Ser157 lines the chloride pocket. The segment at residues 159 to 166 is an intramembrane region (helical); the sequence is IPEIKCYL. Helical transmembrane passes span 176–194 and 200–217; these read RLRT…VSGG and EGPM…LPQF. Positions 198 to 202 match the Selectivity filter part_2 motif; it reads GKEGP. 2 consecutive intramembrane regions (helical) follow at residues 241–253 and 257–265; these read FVSA…VAAA and PIGGTLFSL. 3 helical membrane passes run 277–294, 335–364, and 371–392; these read TWKV…LNFF, GFFV…YRMR, and KLVR…VFVA. Residues Asn410, Asn423, and Asn433 are each glycosylated (N-linked (GlcNAc...) asparagine). 2 helical membrane passes run 463–482 and 488–512; these read PVTL…WTFG and GLFV…KSYI. A Selectivity filter part_3 motif is present at residues 488 to 492; that stretch reads GLFVP. Phe490 contributes to the chloride binding site. Positions 520-534 form an intramembrane region, helical; the sequence is GTFALIGAAAFLGGV. Residues 535–537 constitute an intramembrane region (note=Loop between two helices); the sequence is VRM. Residues 538 to 549 constitute an intramembrane region (helical); the sequence is TISLTVILIEST. An intramembrane region (note=Loop between two helices) is located at residues 550–553; it reads NEIT. A helical transmembrane segment spans residues 554–572; it reads YGLPIMVTLMVAKWTGDLF. Over 573–870 the chain is Cytoplasmic; sequence NKGIYDVHIG…ARLRQHYQTL (298 aa). Tyr577 is a chloride binding site. Positions 606–663 constitute a CBS 1 domain; the sequence is MEPNLTYVYPHTRIQSLVSILRTTVHHAFPVVTENRGNEKEFMKGNQLISNNIKFKKS. An ATP-binding site is contributed by 631 to 633; it reads HHA. The residue at position 774 (Ser774) is a Phosphoserine. Positions 808-869 constitute a CBS 2 domain; it reads MNPSPFTVSP…QARLRQHYQT (62 aa). 850–853 is an ATP binding site; that stretch reads TRHN.

It belongs to the chloride channel (TC 2.A.49) family. ClC-6/CLCN6 subfamily. In terms of processing, N-glycosylated on several asparagine residues. Detected in whole brain and in hippocampus neurons (at protein level). Detected in brain, trigeminus, dorsal root ganglion, spinal cord, eye, kidney, testis, skeletal muscle, thymus and pancreas. Isoform ClC-6c is expressed only in kidney.

It is found in the late endosome membrane. It catalyses the reaction 2 chloride(in) + H(+)(out) = 2 chloride(out) + H(+)(in). Functionally, voltage-gated channel mediating the exchange of chloride ions against protons. Functions as antiporter and contributes to the acidification of the late endosome lumen. The CLC channel family contains both chloride channels and proton-coupled anion transporters that exchange chloride or another anion for protons. The presence of conserved gating glutamate residues is typical for family members that function as antiporters. This is H(+)/Cl(-) exchange transporter 6 from Mus musculus (Mouse).